The sequence spans 308 residues: Homeobox-leucine zipper protein HOX2 (308 aa).

2 disordered regions span residues 15-36 and 71-117; these read QGSLTSSTTTTSSPGAGSSSPW and QGRA…RKKL. The segment covering 74 to 88 has biased composition (low complexity); sequence ASTSPDSAAALSSAS. A DNA-binding region (homeobox) is located at residues 112-171; the sequence is GGRKKLRLSKDQAAVLEECFKTHSTLNPKQKVALANRLGLRPRQVEVWFQNRRARTKLKQ. Residues 170–214 are leucine-zipper; the sequence is KQTEVDCEYLKRWCERLADENKRLEKELADLRALKAAPSPASASA.

The protein belongs to the HD-ZIP homeobox family. Class II subfamily. In terms of assembly, homodimer. May form a heterodimer with HOX1, HOX3 or HOX7. Expressed in seedlings, roots, leaves, nodes, internodes, flowers and embryo.

The protein resides in the nucleus. Probable transcription factor that binds to the DNA sequence 5'-CAAT[GC]ATTG-3'. The protein is Homeobox-leucine zipper protein HOX2 (HOX2) of Oryza sativa subsp. indica (Rice).